A 121-amino-acid chain; its full sequence is Large ribosomal subunit protein eL31 (121 aa).

Belongs to the eukaryotic ribosomal protein eL31 family.

The protein is Large ribosomal subunit protein eL31 (RPL31) of Perilla frutescens (Beefsteak mint).